The sequence spans 224 residues: uncharacterized protein (224 aa).

An N-terminal signal peptide occupies residues 1–17 (MFTILLYFLVLFWVTNA).

This is an uncharacterized protein from Caenorhabditis elegans.